The primary structure comprises 506 residues: Maturase K (506 aa).

This sequence belongs to the intron maturase 2 family. MatK subfamily.

The protein localises to the plastid. It is found in the chloroplast. Its function is as follows. Usually encoded in the trnK tRNA gene intron. Probably assists in splicing its own and other chloroplast group II introns. The polypeptide is Maturase K (Rhododendron ferrugineum (Alpenrose)).